A 118-amino-acid polypeptide reads, in one-letter code: Non-specific lipid-transfer protein 3 (118 aa).

The N-terminal stretch at 1 to 25 is a signal peptide; sequence MARAAATQLVLVAMVAAMLLVATDA. Disulfide bonds link Cys-29–Cys-77, Cys-39–Cys-54, Cys-55–Cys-100, and Cys-75–Cys-114.

Belongs to the plant LTP family.

In terms of biological role, plant non-specific lipid-transfer proteins transfer phospholipids as well as galactolipids across membranes. May play a role in wax or cutin deposition in the cell walls of expanding epidermal cells and certain secretory tissues. The chain is Non-specific lipid-transfer protein 3 (LTP3) from Hordeum vulgare (Barley).